The following is a 545-amino-acid chain: Degenerin-like protein asic-2 (545 aa).

At 1–34 (MRGGGFVQIFKDFSNWSTVAVVPHVANANNKISR) the chain is on the cytoplasmic side. The chain crosses the membrane as a helical span at residues 35–55 (IFWIAIFLFVLGMFAYELYIL). Residues 56–457 (IAKFFSYPAT…NVINDLGGQA (402 aa)) are Extracellular-facing. Residues Cys-83 and Cys-191 are joined by a disulfide bond. N-linked (GlcNAc...) asparagine glycosylation is present at Asn-201. 5 disulfide bridges follow: Cys-284-Cys-370, Cys-305-Cys-366, Cys-309-Cys-364, Cys-318-Cys-343, and Cys-320-Cys-334. Asn-350 carries an N-linked (GlcNAc...) asparagine glycan. Residues 458–478 (GLWLGLSVISVVEMTGLMLVM) traverse the membrane as a helical segment. The GAS motif; ion selectivity filter motif lies at 462 to 464 (GLS). The Cytoplasmic portion of the chain corresponds to 479 to 545 (GAFCVTGGAI…NKGDEEKKKK (67 aa)). 2 stretches are compositionally biased toward basic and acidic residues: residues 514-523 (DHLEKKHGEM) and 534-545 (IENKGDEEKKKK). The tract at residues 514–545 (DHLEKKHGEMESGSDGEVDDIENKGDEEKKKK) is disordered.

This sequence belongs to the amiloride-sensitive sodium channel (TC 1.A.6) family. In terms of assembly, can form homotrimers. Heterotrimer; forms functional heterotrimers producing channel with different properties.

The protein localises to the cell membrane. It carries out the reaction Na(+)(in) = Na(+)(out). Inhibited by the diuretic drug amiloride. Could form pH-gated heterotrimeric sodium channels that act as postsynaptic excitatory sensors in the nervous system, generating rapid, transient inward currents that fully desensitize upon extracellular acidification. This is Degenerin-like protein asic-2 (asic-2) from Caenorhabditis elegans.